Here is a 610-residue protein sequence, read N- to C-terminus: UvrABC system protein C (610 aa).

Positions 16–94 (SQPGVYRMYD…IKLYQPRYNV (79 aa)) constitute a GIY-YIG domain. One can recognise a UVR domain in the interval 204–239 (QQVLTRLIERMEQASQQLKFEDAARYRDQIQAVRQV).

Belongs to the UvrC family. Interacts with UvrB in an incision complex.

It localises to the cytoplasm. Its function is as follows. The UvrABC repair system catalyzes the recognition and processing of DNA lesions. UvrC both incises the 5' and 3' sides of the lesion. The N-terminal half is responsible for the 3' incision and the C-terminal half is responsible for the 5' incision. In Photorhabdus laumondii subsp. laumondii (strain DSM 15139 / CIP 105565 / TT01) (Photorhabdus luminescens subsp. laumondii), this protein is UvrABC system protein C.